A 316-amino-acid chain; its full sequence is Ribosomal RNA small subunit methyltransferase H (316 aa).

S-adenosyl-L-methionine is bound by residues 35-37 (GGH), D55, F80, D102, and Q109.

This sequence belongs to the methyltransferase superfamily. RsmH family.

It localises to the cytoplasm. The catalysed reaction is cytidine(1402) in 16S rRNA + S-adenosyl-L-methionine = N(4)-methylcytidine(1402) in 16S rRNA + S-adenosyl-L-homocysteine + H(+). Its function is as follows. Specifically methylates the N4 position of cytidine in position 1402 (C1402) of 16S rRNA. This chain is Ribosomal RNA small subunit methyltransferase H, found in Colwellia psychrerythraea (strain 34H / ATCC BAA-681) (Vibrio psychroerythus).